The primary structure comprises 62 residues: Potassium channel toxin kappa-KTx 3.3 (62 aa).

The first 26 residues, 1–26 (MKSTLMTASLLILVLLSIVDYASVYA), serve as a signal peptide directing secretion. Residues 27 to 36 (ELIDSEISME) constitute a propeptide that is removed on maturation. 2 disulfides stabilise this stretch: Cys-43/Cys-61 and Cys-47/Cys-57.

Belongs to the short scorpion toxin superfamily. Potassium channel inhibitor kappa-KTx family. Kappa-KTx 3 subfamily. Expressed by the venom gland.

The protein resides in the secreted. Its function is as follows. Potassium channel inhibitor (Kv). In Heterometrus petersii (Asian forest scorpion), this protein is Potassium channel toxin kappa-KTx 3.3.